Reading from the N-terminus, the 173-residue chain is NADH-ubiquinone oxidoreductase chain 6 (173 aa).

Transmembrane regions (helical) follow at residues 1–21, 27–47, 48–68, 87–107, and 139–159; these read MTYF…AVAS, YGVV…LSLG, ASFV…VVFV, VIGY…ISGF, and WGVG…FVVL.

The protein belongs to the complex I subunit 6 family.

The protein resides in the mitochondrion membrane. The enzyme catalyses a ubiquinone + NADH + 5 H(+)(in) = a ubiquinol + NAD(+) + 4 H(+)(out). In terms of biological role, core subunit of the mitochondrial membrane respiratory chain NADH dehydrogenase (Complex I) that is believed to belong to the minimal assembly required for catalysis. Complex I functions in the transfer of electrons from NADH to the respiratory chain. The immediate electron acceptor for the enzyme is believed to be ubiquinone. The chain is NADH-ubiquinone oxidoreductase chain 6 (MT-ND6) from Brachyramphus marmoratus (Marbled murrelet).